A 160-amino-acid chain; its full sequence is Cytochrome c-type biogenesis protein CcmE (160 aa).

Over 1 to 7 (MTRKQRR) the chain is Cytoplasmic. A helical; Signal-anchor for type II membrane protein membrane pass occupies residues 8-28 (ATFIAVSLGILALAVGLVLYA). Topologically, residues 29–160 (MRDSIVYFYS…SETYGQGSYP (132 aa)) are periplasmic. Positions 122 and 126 each coordinate heme. Residues 141-160 (WQGEGAEAPHSETYGQGSYP) are disordered.

The protein belongs to the CcmE/CycJ family.

Its subcellular location is the cell inner membrane. Heme chaperone required for the biogenesis of c-type cytochromes. Transiently binds heme delivered by CcmC and transfers the heme to apo-cytochromes in a process facilitated by CcmF and CcmH. The protein is Cytochrome c-type biogenesis protein CcmE of Parvibaculum lavamentivorans (strain DS-1 / DSM 13023 / NCIMB 13966).